Consider the following 944-residue polypeptide: Protein phosphatase 1 regulatory subunit 37 homolog (944 aa).

The tract at residues 42–71 (QQQSHSAATSVRKKTCQDANSSGEDPNGRI) is disordered. LRR repeat units lie at residues 203-224 (SCVR…TTIF), 232-255 (SLQM…CKMA), 262-282 (SLTC…LVLI), 290-311 (GLRE…HIYQ), and 318-338 (SLQL…RHIC). A disordered region spans residues 517-598 (EEGDSGVEKK…KERHQRFVRS (82 aa)). The segment covering 522-542 (GVEKKDGNECEGEDNKDRQDT) has biased composition (basic and acidic residues). 2 stretches are compositionally biased toward polar residues: residues 543-554 (PAETENGVSSNE) and 567-585 (PESN…STSK). Residues 586 to 595 (LSRKERHQRF) are compositionally biased toward basic residues.

The protein belongs to the PPP1R37 family.

This is Protein phosphatase 1 regulatory subunit 37 homolog from Caenorhabditis elegans.